The following is a 202-amino-acid chain: uncharacterized protein (202 aa).

A signal peptide spans 1–18; it reads MKNRLLILSLLVSVPAFA.

It to E.coli YebB.

This is an uncharacterized protein from Escherichia coli (strain K12).